Reading from the N-terminus, the 277-residue chain is Diaminopimelate epimerase (277 aa).

The substrate site is built by Asn11 and Asn62. Cys71 serves as the catalytic Proton donor. Residues 72–73 (GN), Asn160, Asn193, and 211–212 (ER) contribute to the substrate site. Cys220 (proton acceptor) is an active-site residue. 221 to 222 (GT) contributes to the substrate binding site.

It belongs to the diaminopimelate epimerase family. Homodimer.

Its subcellular location is the cytoplasm. The catalysed reaction is (2S,6S)-2,6-diaminopimelate = meso-2,6-diaminopimelate. The protein operates within amino-acid biosynthesis; L-lysine biosynthesis via DAP pathway; DL-2,6-diaminopimelate from LL-2,6-diaminopimelate: step 1/1. Its function is as follows. Catalyzes the stereoinversion of LL-2,6-diaminopimelate (L,L-DAP) to meso-diaminopimelate (meso-DAP), a precursor of L-lysine. The polypeptide is Diaminopimelate epimerase (Methanococcus maripaludis (strain C5 / ATCC BAA-1333)).